The sequence spans 81 residues: Sulfur carrier protein TusA (81 aa).

The active-site Cysteine persulfide intermediate is Cys-19.

The protein belongs to the sulfur carrier protein TusA family.

It is found in the cytoplasm. Sulfur carrier protein which probably makes part of a sulfur-relay system. This Shewanella denitrificans (strain OS217 / ATCC BAA-1090 / DSM 15013) protein is Sulfur carrier protein TusA.